Here is a 313-residue protein sequence, read N- to C-terminus: Porphobilinogen deaminase (313 aa).

S-(dipyrrolylmethanemethyl)cysteine is present on Cys-242.

This sequence belongs to the HMBS family. As to quaternary structure, monomer. Dipyrromethane is required as a cofactor.

It carries out the reaction 4 porphobilinogen + H2O = hydroxymethylbilane + 4 NH4(+). Its pathway is porphyrin-containing compound metabolism; protoporphyrin-IX biosynthesis; coproporphyrinogen-III from 5-aminolevulinate: step 2/4. Functionally, tetrapolymerization of the monopyrrole PBG into the hydroxymethylbilane pre-uroporphyrinogen in several discrete steps. The chain is Porphobilinogen deaminase from Escherichia coli O6:H1 (strain CFT073 / ATCC 700928 / UPEC).